The sequence spans 519 residues: B3 domain-containing protein Os03g0620400 (519 aa).

Positions Met26–Asp119 form a DNA-binding region, TF-B3 1. Residues Glu138–Tyr218 are disordered. Positions Ser189 to Asp209 are enriched in acidic residues. 2 consecutive DNA-binding regions (TF-B3) follow at residues Val249–Thr349 and Tyr416–Asn516.

It localises to the nucleus. This is B3 domain-containing protein Os03g0620400 from Oryza sativa subsp. japonica (Rice).